The primary structure comprises 173 residues: NADH-ubiquinone oxidoreductase chain 6 (173 aa).

The next 4 membrane-spanning stretches (helical) occupy residues 24-44, 49-69, 80-100, and 139-159; these read MSIM…TGTM, WLSY…FIYI, IKIN…TLMY, and PTVI…LAVV.

This sequence belongs to the complex I subunit 6 family.

It localises to the mitochondrion membrane. It catalyses the reaction a ubiquinone + NADH + 5 H(+)(in) = a ubiquinol + NAD(+) + 4 H(+)(out). Its function is as follows. Core subunit of the mitochondrial membrane respiratory chain NADH dehydrogenase (Complex I) that is believed to belong to the minimal assembly required for catalysis. Complex I functions in the transfer of electrons from NADH to the respiratory chain. The immediate electron acceptor for the enzyme is believed to be ubiquinone. The chain is NADH-ubiquinone oxidoreductase chain 6 (ND6) from Locusta migratoria (Migratory locust).